Reading from the N-terminus, the 122-residue chain is MPRIIGIDIPAKKKLKISLTYIYGIGPALSEEIIARLQLNPEARAAELTEEEVGRLNALLQSDYVVEGDLRRRVQSDIKRLITIHAYRGQRHRLSLPVRGQRTKTNSRTRKGKRKTVAGKKK.

Residues 94-122 are disordered; that stretch reads LSLPVRGQRTKTNSRTRKGKRKTVAGKKK. Positions 101 to 122 are enriched in basic residues; the sequence is QRTKTNSRTRKGKRKTVAGKKK.

Belongs to the universal ribosomal protein uS13 family. In terms of assembly, part of the 30S ribosomal subunit. Forms a loose heterodimer with protein S19. Forms two bridges to the 50S subunit in the 70S ribosome.

Located at the top of the head of the 30S subunit, it contacts several helices of the 16S rRNA. In the 70S ribosome it contacts the 23S rRNA (bridge B1a) and protein L5 of the 50S subunit (bridge B1b), connecting the 2 subunits; these bridges are implicated in subunit movement. Contacts the tRNAs in the A and P-sites. The protein is Small ribosomal subunit protein uS13 of Chlamydia muridarum (strain MoPn / Nigg).